A 440-amino-acid chain; its full sequence is Xylose isomerase (440 aa).

Active-site residues include His-101 and Asp-104. Mg(2+) contacts are provided by Glu-232, Glu-268, His-271, Asp-296, Asp-307, Asp-309, and Asp-339.

It belongs to the xylose isomerase family. As to quaternary structure, homotetramer. Mg(2+) is required as a cofactor.

The protein localises to the cytoplasm. The enzyme catalyses alpha-D-xylose = alpha-D-xylulofuranose. In Escherichia fergusonii (strain ATCC 35469 / DSM 13698 / CCUG 18766 / IAM 14443 / JCM 21226 / LMG 7866 / NBRC 102419 / NCTC 12128 / CDC 0568-73), this protein is Xylose isomerase.